A 127-amino-acid chain; its full sequence is uncharacterized protein (127 aa).

This is an uncharacterized protein from Homo sapiens (Human).